The chain runs to 154 residues: Large ribosomal subunit protein bL17 (154 aa).

The disordered stretch occupies residues threonine 127 to glutamate 154. A compositionally biased stretch (basic and acidic residues) spans lysine 141–glutamate 154.

The protein belongs to the bacterial ribosomal protein bL17 family. In terms of assembly, part of the 50S ribosomal subunit. Contacts protein L32.

This Chlorobaculum parvum (strain DSM 263 / NCIMB 8327) (Chlorobium vibrioforme subsp. thiosulfatophilum) protein is Large ribosomal subunit protein bL17.